The chain runs to 335 residues: Phosphate acyltransferase (335 aa).

Belongs to the PlsX family. In terms of assembly, homodimer. Probably interacts with PlsY.

It is found in the cytoplasm. It carries out the reaction a fatty acyl-[ACP] + phosphate = an acyl phosphate + holo-[ACP]. It functions in the pathway lipid metabolism; phospholipid metabolism. In terms of biological role, catalyzes the reversible formation of acyl-phosphate (acyl-PO(4)) from acyl-[acyl-carrier-protein] (acyl-ACP). This enzyme utilizes acyl-ACP as fatty acyl donor, but not acyl-CoA. This is Phosphate acyltransferase from Streptococcus suis (strain 98HAH33).